Here is a 356-residue protein sequence, read N- to C-terminus: Retinoic acid-induced protein 3 (356 aa).

Residues 1-35 lie on the Extracellular side of the membrane; that stretch reads MTTPTTAPSGCRSDLDSRYHRLCDLAEGWGIALET. Residues 36 to 56 form a helical membrane-spanning segment; the sequence is LAAVGAVATVACMFALVFLIC. Residues 57-68 lie on the Cytoplasmic side of the membrane; sequence KVQDSNKRKMLP. The helical transmembrane segment at 69 to 89 threads the bilayer; sequence AQFLFLLGVLGVFGLTFAFII. Residues 90 to 101 are Extracellular-facing; that stretch reads KLDGATGPTRFF. A helical membrane pass occupies residues 102–122; the sequence is LFGVLFAICFSCLLAHAFNLI. At 123-131 the chain is on the cytoplasmic side; sequence KLVRGRKPL. A helical transmembrane segment spans residues 132–152; sequence SWLVILSLAVGFSLVQDVIAI. At 153 to 178 the chain is on the extracellular side; that stretch reads EYLVLTMNRTNVNVFSELPAPRRNED. N-linked (GlcNAc...) asparagine glycosylation occurs at asparagine 160. Residues 179-199 traverse the membrane as a helical segment; it reads FVMLLIYVLVLMVLTFFTSFL. Over 200-214 the chain is Cytoplasmic; that stretch reads VFCGSFSGWKRHGFH. The chain crosses the membrane as a helical span at residues 215–235; the sequence is ICFTSFLSIAIWVAWIVLLLI. The Extracellular segment spans residues 236–244; the sequence is PDIDRKWDD. A helical membrane pass occupies residues 245-265; that stretch reads TILSTALVANGWVFLAFYILP. Residues 266–356 are Cytoplasmic-facing; that stretch reads EFRQLPRQRS…NDYEGRKGDS (91 aa). A Phosphoserine modification is found at serine 303. Tyrosine 318 and tyrosine 321 each carry phosphotyrosine. The tract at residues 336 to 356 is disordered; sequence IPRAQAPASPYNDYEGRKGDS. Serine 344 is modified (phosphoserine). A phosphotyrosine mark is found at tyrosine 346 and tyrosine 349.

This sequence belongs to the G-protein coupled receptor 3 family. As to quaternary structure, interacts (via its transmembrane domain) with EGFR. Post-translationally, phosphorylated in two conserved double-tyrosine motifs, Tyr 318/Tyr-321 and Tyr-346/Tyr-349 by EGFR. Tyr-318 and Tyr-321 are the preferred residues responsible for EGFR-mediated GPRC5A phosphorylation. As to expression, expressed predominantly in normal fetal and adult lung. Almost undetectable or expressed at very low levels in other tissues.

Its subcellular location is the cell membrane. In terms of biological role, orphan receptor. Could be involved in modulating differentiation and maintaining homeostasis of epithelial cells. This retinoic acid-inducible GPCR provides evidence for a possible interaction between retinoid and G-protein signaling pathways. Functions as a negative modulator of EGFR signaling. Acts as a lung tumor suppressor. This chain is Retinoic acid-induced protein 3 (Gprc5a), found in Mus musculus (Mouse).